A 322-amino-acid chain; its full sequence is Peroxisomal adenine nucleotide carrier 1 (322 aa).

Solcar repeat units lie at residues 5-94, 104-184, and 202-298; these read LESV…FKRV, IGTK…LKQH, and LSAF…ITAT. The next 6 helical transmembrane spans lie at 8–28, 104–124, 158–178, 201–221, 254–274, and 286–306; these read VSEATSGAIGSLLSTTILYPL, IGTKANLLIAAAAGACTSVLI, FDGLGISLLLTSNPAIQYTVF, VLSAFMAFVLGAVSKSVATVL, IPGVVYAIWRKEGMLGFFKGL, and ALLLMIKEKITATTWILILAI.

This sequence belongs to the mitochondrial carrier (TC 2.A.29) family. Expressed in stamens, pollen grains, seeds, leaves, cotyledons, roots, stems, flowers, hypocotyls and siliques.

Its subcellular location is the peroxisome membrane. In terms of biological role, peroxisomal adenine nucleotide transporter catalyzing the counterexchange of ATP with AMP. ATP is needed by reactions that generate acyl-CoA for peroxisomal fatty acid beta-oxidation during postgerminative growth. Required for the beta-oxidation reactions involved in auxin biosynthesis and for the conversion of seed-reserved triacylglycerols into sucrose that is necessary for growth before the onset of photosynthesis. This chain is Peroxisomal adenine nucleotide carrier 1 (PNC1), found in Arabidopsis thaliana (Mouse-ear cress).